The primary structure comprises 160 residues: MAKKKNKAGDNTIALNKRARHDYFIEEEIEAGLSLQGWEVKSMRAGKANISDSYVIFNNGEAFLFGATIQPLSVASTHVVCDPTRTRKLLLNERELASLFGKANRDGYTLVALSLYWKNAWAKLKIGLAKGKKQHDKREDIKDREWKVQKDRIMKNAHRG.

It belongs to the SmpB family.

The protein localises to the cytoplasm. In terms of biological role, required for rescue of stalled ribosomes mediated by trans-translation. Binds to transfer-messenger RNA (tmRNA), required for stable association of tmRNA with ribosomes. tmRNA and SmpB together mimic tRNA shape, replacing the anticodon stem-loop with SmpB. tmRNA is encoded by the ssrA gene; the 2 termini fold to resemble tRNA(Ala) and it encodes a 'tag peptide', a short internal open reading frame. During trans-translation Ala-aminoacylated tmRNA acts like a tRNA, entering the A-site of stalled ribosomes, displacing the stalled mRNA. The ribosome then switches to translate the ORF on the tmRNA; the nascent peptide is terminated with the 'tag peptide' encoded by the tmRNA and targeted for degradation. The ribosome is freed to recommence translation, which seems to be the essential function of trans-translation. This is SsrA-binding protein from Actinobacillus succinogenes (strain ATCC 55618 / DSM 22257 / CCUG 43843 / 130Z).